The sequence spans 1030 residues: Putative pentatricopeptide repeat-containing protein At5g06400, mitochondrial (1030 aa).

Residues methionine 1–arginine 77 constitute a mitochondrion transit peptide. PPR repeat units follow at residues arginine 188–lysine 222, aspartate 223–leucine 257, aspartate 258–phenylalanine 292, glycine 293–isoleucine 323, glutamate 328–leucine 362, aspartate 363–arginine 393, aspartate 397–proline 431, arginine 432–proline 466, aspartate 467–proline 501, threonine 502–isoleucine 536, asparagine 677–isoleucine 711, threonine 712–proline 746, serine 747–proline 783, aspartate 784–isoleucine 814, valine 818–leucine 852, aspartate 853–proline 887, glycine 888–proline 922, serine 923–proline 957, and aspartate 958–proline 992.

It belongs to the PPR family. P subfamily.

It is found in the mitochondrion. The protein is Putative pentatricopeptide repeat-containing protein At5g06400, mitochondrial of Arabidopsis thaliana (Mouse-ear cress).